An 860-amino-acid polypeptide reads, in one-letter code: Leucine--tRNA ligase (860 aa).

The short motif at 42–52 is the 'HIGH' region element; the sequence is PYPSGRLHMGH. A 'KMSKS' region motif is present at residues 619–623; the sequence is KMSKS. ATP is bound at residue Lys622.

This sequence belongs to the class-I aminoacyl-tRNA synthetase family.

It localises to the cytoplasm. The catalysed reaction is tRNA(Leu) + L-leucine + ATP = L-leucyl-tRNA(Leu) + AMP + diphosphate. In Escherichia coli O45:K1 (strain S88 / ExPEC), this protein is Leucine--tRNA ligase.